The sequence spans 327 residues: Interleukin-12 subunit beta (327 aa).

The signal sequence occupies residues 1-22; that stretch reads MCHQKLTISWFAMVLLVSPLMA. Residues 23–106 form the Ig-like C2-type domain; the sequence is IWELEKDVYV…LSHSRLLLHK (84 aa). Cys-50 and Cys-90 are joined by a disulfide. Asn-125, Asn-135, Asn-223, and Asn-315 each carry an N-linked (GlcNAc...) asparagine glycan. A Fibronectin type-III domain is found at 238–327; that stretch reads PPKNLQLKPL…WSEWASVSCN (90 aa).

Belongs to the IL-12B family. In terms of assembly, heterodimer with IL12A; disulfide-linked. The heterodimer is known as interleukin IL-12. Heterodimer with IL23A; disulfide-linked. The heterodimer is known as interleukin IL-23. Also secreted as a monomer. Interacts with NBR1; this interaction promotes IL-12 secretion.

The protein localises to the secreted. In terms of biological role, cytokine that can act as a growth factor for activated T and NK cells, enhance the lytic activity of NK/lymphokine-activated killer cells, and stimulate the production of IFN-gamma by resting PBMC. Its function is as follows. Associates with IL23A to form the IL-23 interleukin, a heterodimeric cytokine which functions in innate and adaptive immunity. IL-23 may constitute with IL-17 an acute response to infection in peripheral tissues. IL-23 binds to a heterodimeric receptor complex composed of IL12RB1 and IL23R, activates the Jak-Stat signaling cascade, stimulates memory rather than naive T-cells and promotes production of pro-inflammatory cytokines. IL-23 induces autoimmune inflammation and thus may be responsible for autoimmune inflammatory diseases and may be important for tumorigenesis. This Sigmodon hispidus (Hispid cotton rat) protein is Interleukin-12 subunit beta (IL12B).